The sequence spans 211 residues: Acyl-homoserine-lactone synthase (211 aa).

This sequence belongs to the autoinducer synthase family.

It catalyses the reaction a fatty acyl-[ACP] + S-adenosyl-L-methionine = an N-acyl-L-homoserine lactone + S-methyl-5'-thioadenosine + holo-[ACP] + H(+). Functionally, required for the synthesis of OHHL (N-(3-oxohexanoyl)-L-homoserine lactone), an autoinducer molecule which binds to TraR and thus acts in the control of conjugal transfer. The sequence is that of Acyl-homoserine-lactone synthase (traI) from Agrobacterium fabrum (strain C58 / ATCC 33970) (Agrobacterium tumefaciens (strain C58)).